Consider the following 401-residue polypeptide: Adaptive-response sensory kinase SasA (401 aa).

One can recognise a Histidine kinase domain in the interval 175–400; the sequence is MLVHDLRNPL…WFHFTLPVYP (226 aa). Histidine 178 bears the Phosphohistidine; by autocatalysis mark.

In terms of assembly, homooligomerizes. Interacts with KaiC. Participates in the KaiABC clock complex, whose core is composed of a KaiC homohexamer, 6 KaiB and up to 6 KaiA dimers. SasA and KaiB(fs) compete to bind to KaiC.

It carries out the reaction ATP + protein L-histidine = ADP + protein N-phospho-L-histidine.. Its function is as follows. Member of the two-component regulatory system SasA/RpaA involved in genome-wide circadian gene expression. One of several clock output pathways. Participates in the Kai clock protein complex, the main circadian regulator in cyanobacteria, via its interaction with KaiC. KaiC enhances the autophosphorylation activity of SasA, which then transfers its phosphate group to RpaA to activate it. In addition to its output function, recruits fold-shifted KaiB (KaiB(fs)) to KaiC to cooperatively form the KaiB(6):KaiC(6) complex (independent of SasA kinase activity). Required for robustness of the circadian rhythm of gene expression and is involved in clock output, also required for adaptation to light/dark cycles. The protein is Adaptive-response sensory kinase SasA of Nostoc sp. (strain PCC 7120 / SAG 25.82 / UTEX 2576).